The sequence spans 240 residues: Glutamine transport ATP-binding protein GlnQ (240 aa).

One can recognise an ABC transporter domain in the interval isoleucine 2–leucine 236. Residue glycine 34–serine 41 participates in ATP binding.

The protein belongs to the ABC transporter superfamily. As to quaternary structure, heterotetramer with 2 subunits of GlnQ and 2 subunits of GlnP.

The protein resides in the cell inner membrane. Part of the binding-protein-dependent transport system for glutamine. Probably responsible for energy coupling to the transport system. The sequence is that of Glutamine transport ATP-binding protein GlnQ (glnQ) from Escherichia coli (strain K12).